The chain runs to 146 residues: Spermidine export protein MdtJ (146 aa).

The next 4 membrane-spanning stretches (helical) occupy residues 1–21 (MIYWIFLVLAIICEVIGTLSM), 31–51 (TGMIVMWLMIATSYIFLAIAV), 54–74 (VALGVAYALWEGIGIVIITTF), and 76–96 (VLWFGESLSALKLGGLAMLIA).

It belongs to the drug/metabolite transporter (DMT) superfamily. Small multidrug resistance (SMR) (TC 2.A.7.1) family. MdtJ subfamily. In terms of assembly, forms a complex with MdtI.

The protein resides in the cell inner membrane. Functionally, catalyzes the excretion of spermidine. The chain is Spermidine export protein MdtJ from Proteus mirabilis (strain HI4320).